The chain runs to 352 residues: MALTVDVAGPAPWGFRITGGRDFHTPIMVTKVAERGKAKDADLRPGDIIVAINGESAEGMLHAEAQSKIRQSPSPLRLQLDRSQATSPGQTNGDSSLEVLATRFQGSVRTYTESQSSLRSSYSSPTSLSPRAGSPFSPPPSSSSLTGEAAISRSFQSLACSPGLPAADRLSYSGRPGSRQAGLGRAGDSAVLVLPPSPGPRSSRPSMDSEGGSLLLDEDSEVFKMLQENREGRAAPRQSSSFRLLQEALEAEERGGTPAFLPSSLSPQSSLPASRALATPPKLHTCEKCSTSIANQAVRIQEGRYRHPGCYTCADCGLNLKMRGHFWVGDELYCEKHARQRYSAPATLSSRA.

Residues 1–84 (MALTVDVAGP…PLRLQLDRSQ (84 aa)) enclose the PDZ domain. Disordered stretches follow at residues 67–97 (SKIR…DSSL) and 111–149 (YTES…TGEA). The segment covering 81 to 95 (DRSQATSPGQTNGDS) has biased composition (polar residues). Positions 111–135 (YTESQSSLRSSYSSPTSLSPRAGSP) are enriched in low complexity. Ser124 is subject to Phosphoserine. Thr126 carries the phosphothreonine modification. Residues Ser127, Ser129, Ser134, Ser137, Ser143, Ser161, Ser197, Ser203, Ser213, and Ser266 each carry the phosphoserine modification. The disordered stretch occupies residues 170-213 (LSYSGRPGSRQAGLGRAGDSAVLVLPPSPGPRSSRPSMDSEGGS). Residues 284–344 (HTCEKCSTSI…EKHARQRYSA (61 aa)) enclose the LIM zinc-binding domain.

Interacts with alpha-actinins ACTN1 and ACTN4, FLNA and MYH9. Interacts (via LIM zinc-binding domain) with MKRN2.

It localises to the cytoplasm. It is found in the nucleus. The protein localises to the cytoskeleton. Functionally, probable adapter protein located at the actin cytoskeleton that promotes cell attachment. Necessary for the migratory capacity of epithelial cells. Overexpression enhances cell adhesion to collagen and fibronectin and suppresses anchorage independent growth. May contribute to tumor cell migratory capacity. The sequence is that of PDZ and LIM domain protein 2 (PDLIM2) from Homo sapiens (Human).